The following is a 492-amino-acid chain: Putative BTB/POZ domain and WD-repeat protein R786 (492 aa).

The BTB domain maps to 16–86; that stretch reads TDVEIVLIDE…FYGQIVDSTN (71 aa). WD repeat units lie at residues 241–281 and 286–325; these read QSSC…IKIK and LINRLIANHTIITDYNLFISIGYNESILVWDKNYTISKGI.

This sequence belongs to the mimivirus BTB/WD family.

This is Putative BTB/POZ domain and WD-repeat protein R786 from Acanthamoeba polyphaga (Amoeba).